Here is a 1124-residue protein sequence, read N- to C-terminus: MVSHLIFTDFYSKKFQKMKYSSDSEDNKKETIYTYYFTEQEKYAKIYGSKTLVFIQIGKFYEAYCTRKKGYVNLAELEPLLNIKFIRRDDKPIKDGKPPKPNQFGINCVAISKNLSIMVNHGYTVVLFDQKSDGETIERECVGVYSPGTYLSDIQMQEANYLLSVYISEEKQLTCNKNLMAIGLSLVDISTGTNIIHEFYSNKFDERFGLDELVRMMQTFRPVESVIYYHPVNIDESAIKNVKLYLELDKYHNVHFYIYHNNKGEDALNLLTENSFKINFQNDYLAQIYEMNNQLTLNKKQSPLEILGLERRNYAAVSLMMMLKYIAEHNVLLLKNLSYPEIYLYNKHLILGNNAIEQLNVIDSNNLELYNSKISSVFDVINKTSTPMGKRFLKDNLLNPLSQENKKEIIKRYDYIEALIQGNIFKEIKTELKNIYDIERLHRRMAVGAIVPYEFTRLDNYYKATNRVYSVIKDNDVIKSIIPMNIFKEFVEYQVKYNKEFDTEKMANHANFGEISESFFRKGIHEDLDKIQEKIDYIQSLIKSTNYYFTSIIKDKCKKLGNKEILSMESNDREGYYFTISKSNEKILKQEIDKKKGIIKIDLTIGETLDIKKDDIVFKQLPKGRTKVFMAQLAEYTIKLPSLTEKLTELIKKKFIKSMVTYYSNHKSMLHQITRFVSEIDFLVSGAIVAKEYYYCKPSILSENSIPSYLQAKDLRHVIVERLCDETVYVPNDIELGNVPNIIHTKNKKDSSIEEVSIDETDKFKKVLGKKCNGIVLFSNNWAGKSTCMKSVGIAIILAQIGYYVPATEFNYEPYMALYARITGNDNIFKGLSSFALEMTELDAILMRTEKQGSNTLVIGDEVCKGTEDISGRAIVASALVSLSECDSTFIFSSHLHDIQNIDEVKSLNNLRVYHLRTEYDEENDCIIFDRKLMPGSGPSVYGLLVARYLVKNPKFINRAEIIKKRLTNDINVNLIPKKSNYNKDLLVKQCMICRYIPTTEYHKELESHHIHFQKNCWTDGKIKEKPYLSKNKLYNLVVLCRKCHNKVHQGEIIINGYTDTTIGPLLDYNMDIKKKIINGIKAVDDLEKSFKFSNNKSQIQKTKNTTVKKIQTSKKNNLVCEYA.

Position 779-786 (779-786 (SNNWAGKS)) interacts with ATP.

It belongs to the DNA mismatch repair MutS family.

Functionally, may be involved in DNA-mismatch repair. This chain is Putative DNA mismatch repair protein mutS homolog L359, found in Acanthamoeba polyphaga (Amoeba).